The sequence spans 253 residues: tRNA pseudouridine synthase A (253 aa).

D52 (nucleophile) is an active-site residue. Position 110 (Y110) interacts with substrate.

The protein belongs to the tRNA pseudouridine synthase TruA family. In terms of assembly, homodimer.

The enzyme catalyses uridine(38/39/40) in tRNA = pseudouridine(38/39/40) in tRNA. Its function is as follows. Formation of pseudouridine at positions 38, 39 and 40 in the anticodon stem and loop of transfer RNAs. The polypeptide is tRNA pseudouridine synthase A (Thermus thermophilus (strain ATCC BAA-163 / DSM 7039 / HB27)).